The following is a 223-amino-acid chain: Transcriptional regulatory protein PhoP (223 aa).

Positions 2–116 (RVLVVEDNAL…EVMARMQALM (115 aa)) constitute a Response regulatory domain. Residue Asp51 is modified to 4-aspartylphosphate. A DNA-binding region (ompR/PhoB-type) is located at residues 124–222 (SQVISLPPFQ…VRGQGYLFEL (99 aa)).

In terms of assembly, monomer in the inactive, unphosphorylated state and dimer in the active, phosphorylated state. Phosphorylated by PhoQ.

The protein localises to the cytoplasm. Its activity is regulated as follows. Feedback inhibited by MgrB, which seems to bind PhoQ, altering its activity and that of downstream effector PhoP. PhoP-regulated transcription is redox-sensitive, being activated when the periplasm becomes more reducing (deletion of dsbA/dsbB, or treatment with dithiothreitol). MgrB acts between DsbA/DsbB and PhoP/PhoQ in this pathway. In terms of biological role, member of the two-component regulatory system PhoP/PhoQ involved in adaptation to low Mg(2+) environments and the control of acid resistance genes. In low periplasmic Mg(2+), PhoQ phosphorylates PhoP, resulting in the expression of PhoP-activated genes (PAG) and repression of PhoP-repressed genes (PRG). In high periplasmic Mg(2+), PhoQ dephosphorylates phospho-PhoP, resulting in the repression of PAG and may lead to expression of some PRG. Mediates magnesium influx to the cytosol by activation of MgtA. Promotes expression of the two-component regulatory system rstA/rstB and transcription of the hemL, mgrB, nagA, slyB, vboR and yrbL genes. In Escherichia coli (strain K12), this protein is Transcriptional regulatory protein PhoP (phoP).